The chain runs to 160 residues: Ribonuclease HI (160 aa).

Residues 4 to 147 (TPNSVTLYTD…CDRLAVAAYQ (144 aa)) enclose the RNase H type-1 domain. Mg(2+) is bound by residues aspartate 13, glutamate 52, aspartate 74, and aspartate 139.

Belongs to the RNase H family. As to quaternary structure, monomer. Requires Mg(2+) as cofactor.

Its subcellular location is the cytoplasm. It carries out the reaction Endonucleolytic cleavage to 5'-phosphomonoester.. In terms of biological role, endonuclease that specifically degrades the RNA of RNA-DNA hybrids. The polypeptide is Ribonuclease HI (rnhA) (Synechocystis sp. (strain ATCC 27184 / PCC 6803 / Kazusa)).